We begin with the raw amino-acid sequence, 172 residues long: General stress protein 18 (172 aa).

The 169-residue stretch at 3–171 (KKIAVVLTYY…FNRESLALLE (169 aa)) folds into the PfpI endopeptidase domain. Cys-104 (nucleophile) is an active-site residue. Residue His-105 is part of the active site.

This sequence belongs to the peptidase C56 family.

Functionally, functions in the protection against aldehyde-stress, possibly by degrading damaged proteins. In Bacillus subtilis (strain 168), this protein is General stress protein 18 (yfkM).